Here is a 364-residue protein sequence, read N- to C-terminus: 2-oxoglutarate-dependent dioxygenase imqE (364 aa).

The tract at residues Lys-73 to Gly-92 is disordered. Residues Asp-199–Ala-315 enclose the Fe2OG dioxygenase domain. Residues His-227, Asp-229, and His-287 each coordinate Fe cation. Arg-306 provides a ligand contact to 2-oxoglutarate.

It belongs to the iron/ascorbate-dependent oxidoreductase family. Fe(2+) is required as a cofactor.

Its pathway is secondary metabolite biosynthesis. In terms of biological role, 2-oxoglutarate-dependent dioxygenase; part of the gene cluster that mediates the biosynthesis of imizoquins A to D, tripeptide-derived alkaloids that serve a protective role against oxidative stress that are essential for normal germination. ImqB is a canonical three-module NRPS that assembles the tripeptide backbone of the imizoquins via condensation of Trp, Tyr, and Leu-derived precursors. N-methylation by imqF and phenol oxidation by imqC, followed by cyclization via the FAD-dependent oxidase imqH carry out the three-step transformation of L-tyrosine into tetrahydroisoquinoline. Importantly, this sequence requires the presence of a free amine in the tyrosine moiety, indicating that isoquinoline formation occurs prior to peptide bond formation. The imidazolidin-4-one ring of imizoquins could form following additional oxidation of the methyl-derived bridgehead carbon by imqH. Lastly, O-methylation by imqG and leucine hydroxylation by imqE complete biosynthesis of the imizoquins. The chain is 2-oxoglutarate-dependent dioxygenase imqE from Aspergillus flavus (strain ATCC 200026 / FGSC A1120 / IAM 13836 / NRRL 3357 / JCM 12722 / SRRC 167).